Consider the following 431-residue polypeptide: Adenylosuccinate synthetase (431 aa).

GTP contacts are provided by residues 13–19 and 41–43; these read GDEGKGK and GHT. Residue D14 is the Proton acceptor of the active site. Mg(2+)-binding residues include D14 and G41. Residues 14 to 17, 39 to 42, T130, R144, Q225, T240, and R304 each bind IMP; these read DEGK and NAGH. The active-site Proton donor is H42. Residue 300-306 coordinates substrate; it reads ATTGRKR. GTP-binding positions include R306, 332 to 334, and 415 to 417; these read KLD and STG.

The protein belongs to the adenylosuccinate synthetase family. As to quaternary structure, homodimer. Mg(2+) serves as cofactor.

It is found in the cytoplasm. It catalyses the reaction IMP + L-aspartate + GTP = N(6)-(1,2-dicarboxyethyl)-AMP + GDP + phosphate + 2 H(+). It functions in the pathway purine metabolism; AMP biosynthesis via de novo pathway; AMP from IMP: step 1/2. Its function is as follows. Plays an important role in the de novo pathway of purine nucleotide biosynthesis. Catalyzes the first committed step in the biosynthesis of AMP from IMP. In Shewanella denitrificans (strain OS217 / ATCC BAA-1090 / DSM 15013), this protein is Adenylosuccinate synthetase.